A 174-amino-acid chain; its full sequence is Co-chaperone protein HscB (174 aa).

A J domain is found at 2-74 (DYFTLFGLPA…LKRAEYMLSL (73 aa)).

This sequence belongs to the HscB family. Interacts with HscA and stimulates its ATPase activity. Interacts with IscU.

Functionally, co-chaperone involved in the maturation of iron-sulfur cluster-containing proteins. Seems to help targeting proteins to be folded toward HscA. This chain is Co-chaperone protein HscB, found in Yersinia pestis bv. Antiqua (strain Antiqua).